Consider the following 196-residue polypeptide: CASP-like protein 2U1 (196 aa).

Topologically, residues 1–11 (MAPMECVRRRN) are cytoplasmic. A helical membrane pass occupies residues 12–32 (VGELVLRCAATLVCMLSLMLL). Residues 33 to 58 (VRDQQIAVQEVGVTSVTTQLRYSSST) are Extracellular-facing. The helical transmembrane segment at 59–79 (GLVYLVYANGLVALYCFVVVL) threads the bilayer. At 80–95 (TSSFNGGSVMRRNKSG) the chain is on the cytoplasmic side. The helical transmembrane segment at 96–116 (AWALFVLDQVLACILLSAASA) threads the bilayer. At 117–148 (ASEIAFLVEKGAKKTIWDSKCIVYGHFCRMLE) the chain is on the extracellular side. Residues 149-169 (VSIATSFIAVIMLGSICVLSA) form a helical membrane-spanning segment. The Cytoplasmic portion of the chain corresponds to 170–196 (KQLFQQYTHYARIVNMVKLKSTPNSLL).

It belongs to the Casparian strip membrane proteins (CASP) family. In terms of assembly, homodimer and heterodimers.

Its subcellular location is the cell membrane. The chain is CASP-like protein 2U1 from Pteridium aquilinum subsp. aquilinum (Bracken fern).